The following is a 246-amino-acid chain: Adenosylcobinamide-GDP ribazoletransferase (246 aa).

Helical transmembrane passes span 34–54 (IVTF…VALL), 59–79 (CGVP…TGGF), 113–133 (GGLA…ELLL), 136–156 (IHPI…AALL), 181–201 (TLVT…LQGL), and 203–223 (AALI…RTLG).

Belongs to the CobS family. It depends on Mg(2+) as a cofactor.

It is found in the cell inner membrane. The catalysed reaction is alpha-ribazole + adenosylcob(III)inamide-GDP = adenosylcob(III)alamin + GMP + H(+). It catalyses the reaction alpha-ribazole 5'-phosphate + adenosylcob(III)inamide-GDP = adenosylcob(III)alamin 5'-phosphate + GMP + H(+). It functions in the pathway cofactor biosynthesis; adenosylcobalamin biosynthesis; adenosylcobalamin from cob(II)yrinate a,c-diamide: step 7/7. Joins adenosylcobinamide-GDP and alpha-ribazole to generate adenosylcobalamin (Ado-cobalamin). Also synthesizes adenosylcobalamin 5'-phosphate from adenosylcobinamide-GDP and alpha-ribazole 5'-phosphate. This is Adenosylcobinamide-GDP ribazoletransferase from Klebsiella pneumoniae subsp. pneumoniae (strain ATCC 700721 / MGH 78578).